The primary structure comprises 385 residues: Putative nickel insertion protein (385 aa).

This sequence belongs to the LarC family.

In Citrifermentans bemidjiense (strain ATCC BAA-1014 / DSM 16622 / JCM 12645 / Bem) (Geobacter bemidjiensis), this protein is Putative nickel insertion protein.